We begin with the raw amino-acid sequence, 1093 residues long: Semaphorin-5B (1093 aa).

A signal peptide spans 1–19 (MVVPGPLALSLLLSSLTLL). The Extracellular segment spans residues 20-978 (VSHLSSSQDI…TSCGGFNLIH (959 aa)). In terms of domain architecture, Sema spans 45–495 (HPIVAFEDLK…LSDRVLRVPL (451 aa)). Asn-59 and Asn-95 each carry an N-linked (GlcNAc...) asparagine glycan. Intrachain disulfides connect Cys-114–Cys-124 and Cys-141–Cys-150. Residues Asn-157, Asn-178, and Asn-287 are each glycosylated (N-linked (GlcNAc...) asparagine). 2 disulfides stabilise this stretch: Cys-264-Cys-367 and Cys-288-Cys-330. Asn-333, Asn-378, Asn-532, Asn-539, Asn-547, and Asn-602 each carry an N-linked (GlcNAc...) asparagine glycan. TSP type-1 domains follow at residues 551 to 605 (DGGF…NCSR), 606 to 662 (NGAW…TPCP), 664 to 713 (PIFW…EACP), 721 to 776 (WTPW…ACDT), 795 to 850 (NGGW…QACP), 852 to 907 (RGAW…QACP), and 908 to 952 (EGWS…RPCP). Intrachain disulfides connect Cys-618/Cys-655, Cys-622/Cys-661, Cys-633/Cys-645, Cys-676/Cys-707, Cys-680/Cys-712, and Cys-691/Cys-697. A glycan (N-linked (GlcNAc...) asparagine) is linked at Asn-728. 6 disulfides stabilise this stretch: Cys-807–Cys-844, Cys-811–Cys-849, Cys-822–Cys-834, Cys-864–Cys-901, Cys-868–Cys-906, and Cys-879–Cys-891. The N-linked (GlcNAc...) asparagine glycan is linked to Asn-944. A helical membrane pass occupies residues 979 to 999 (LIVTGVSCFLVSGLLTLAVYL). The Cytoplasmic portion of the chain corresponds to 1000-1093 (SCQHCQRQSQ…SPGQRCFPNS (94 aa)).

It belongs to the semaphorin family. In terms of tissue distribution, in adult, only detected in brain.

It is found in the membrane. May act as a positive axonal guidance cue. The protein is Semaphorin-5B (Sema5b) of Mus musculus (Mouse).